We begin with the raw amino-acid sequence, 947 residues long: Bifunctional glutamine synthetase adenylyltransferase/adenylyl-removing enzyme (947 aa).

An adenylyl removase region spans residues 1–440 (MTPLSSPLSQ…VFNELIGDDE (440 aa)). An adenylyl transferase region spans residues 450-947 (SEPWREVWQD…ASWRKWLVAV (498 aa)).

Belongs to the GlnE family. The cofactor is Mg(2+).

It catalyses the reaction [glutamine synthetase]-O(4)-(5'-adenylyl)-L-tyrosine + phosphate = [glutamine synthetase]-L-tyrosine + ADP. The catalysed reaction is [glutamine synthetase]-L-tyrosine + ATP = [glutamine synthetase]-O(4)-(5'-adenylyl)-L-tyrosine + diphosphate. Its function is as follows. Involved in the regulation of glutamine synthetase GlnA, a key enzyme in the process to assimilate ammonia. When cellular nitrogen levels are high, the C-terminal adenylyl transferase (AT) inactivates GlnA by covalent transfer of an adenylyl group from ATP to specific tyrosine residue of GlnA, thus reducing its activity. Conversely, when nitrogen levels are low, the N-terminal adenylyl removase (AR) activates GlnA by removing the adenylyl group by phosphorolysis, increasing its activity. The regulatory region of GlnE binds the signal transduction protein PII (GlnB) which indicates the nitrogen status of the cell. The protein is Bifunctional glutamine synthetase adenylyltransferase/adenylyl-removing enzyme of Salmonella agona (strain SL483).